The sequence spans 390 residues: Protein-glutamate methylesterase/protein-glutamine glutaminase (390 aa).

The 118-residue stretch at 4 to 121 (RALVVDDSGF…SGDMEQVKRQ (118 aa)) folds into the Response regulatory domain. Asp55 carries the 4-aspartylphosphate modification. The segment at 130-198 (GGGRGAPAGR…AAPAPERGQR (69 aa)) is disordered. 2 stretches are compositionally biased toward low complexity: residues 136–148 (PAGRAPRPAAPVD) and 179–193 (EAPVAPTGAPAAPAP). The CheB-type methylesterase domain maps to 201–390 (PGALRLVVIG…QVGEELAKLR (190 aa)). Active-site residues include Ser212, His239, and Asp335.

The protein belongs to the CheB family. Phosphorylated by CheA. Phosphorylation of the N-terminal regulatory domain activates the methylesterase activity.

It is found in the cytoplasm. The enzyme catalyses [protein]-L-glutamate 5-O-methyl ester + H2O = L-glutamyl-[protein] + methanol + H(+). The catalysed reaction is L-glutaminyl-[protein] + H2O = L-glutamyl-[protein] + NH4(+). Involved in chemotaxis. Part of a chemotaxis signal transduction system that modulates chemotaxis in response to various stimuli. Catalyzes the demethylation of specific methylglutamate residues introduced into the chemoreceptors (methyl-accepting chemotaxis proteins or MCP) by CheR. Also mediates the irreversible deamidation of specific glutamine residues to glutamic acid. This chain is Protein-glutamate methylesterase/protein-glutamine glutaminase, found in Alkalilimnicola ehrlichii (strain ATCC BAA-1101 / DSM 17681 / MLHE-1).